Consider the following 194-residue polypeptide: Adenylate kinase (194 aa).

12–17 provides a ligand contact to ATP; the sequence is GSGKTT. The NMP stretch occupies residues 34–63; it reads STGDLLREEVKKGTPLGATIASFIDNGQLV. Residues T35, R40, 61-63, 88-91, and Q95 contribute to the AMP site; these read QLV and GFPR. The segment at 130–136 is LID; sequence GRARGAD. Position 131 (R131) interacts with ATP. Positions 133 and 145 each coordinate AMP. Residue R173 participates in ATP binding.

This sequence belongs to the adenylate kinase family. Monomer.

It localises to the cytoplasm. It catalyses the reaction AMP + ATP = 2 ADP. It functions in the pathway purine metabolism; AMP biosynthesis via salvage pathway; AMP from ADP: step 1/1. Functionally, catalyzes the reversible transfer of the terminal phosphate group between ATP and AMP. Plays an important role in cellular energy homeostasis and in adenine nucleotide metabolism. This chain is Adenylate kinase, found in Nitratiruptor sp. (strain SB155-2).